The primary structure comprises 272 residues: MNISKLPPLSPSVIRRILFYLLMLLFCQQLAMIFWRIGLPDNAPVSSVQITPAQARQQPVTLNDFTLFGVSPEKNKAGALDASQMSNLPPSTLNLSLTGVMAGDDDSRSIAIISKDNEQFSRGVNEEVPGYNAKIVSIRPDRVVLQYQGRYEVLGLYSQEDSGSDGVPGAQVNEQLQQRASTTMSDYVSFSPIMNDNKLQGYRLNPGPKSDSFYRVGLQDNDMAVALNGLDLRDAEQAKKAMERMADVHNFTLTVERDGQRQDIYMEFGGDE.

The Cytoplasmic portion of the chain corresponds to 1–16; that stretch reads MNISKLPPLSPSVIRR. Residues 17 to 35 traverse the membrane as a helical segment; sequence ILFYLLMLLFCQQLAMIFW. At 36–272 the chain is on the periplasmic side; that stretch reads RIGLPDNAPV…DIYMEFGGDE (237 aa).

It belongs to the GSP C family.

The protein localises to the cell inner membrane. Functionally, involved in a type II secretion system (T2SS, formerly general secretion pathway, GSP) for the export of proteins. Required for the translocation of the multiple pectic enzymes. The protein is Type II secretion system protein C (outC) of Dickeya dadantii (strain 3937) (Erwinia chrysanthemi (strain 3937)).